The sequence spans 129 residues: Ig kappa chain V-IV region S107B (129 aa).

The first 22 residues, 1–22 (MDLQVQIIXFLLISVTVIMSRG), serve as a signal peptide directing secretion. Residues 23 to 45 (ENVLTQSPAIMAASLGQKVTMTC) form a framework-1 region. A disulfide bond links Cys-45 and Cys-111. The interval 46–57 (SASSSVSSSYLH) is complementarity-determining-1. Residues 58–72 (WYQQKSGASPKPLIH) are framework-2. The tract at residues 73-79 (RTSNLAS) is complementarity-determining-2. Positions 80–111 (GVPARFSGSGSGTSYSLTISSVEAEDDATYYC) are framework-3. Positions 112 to 118 (QQWSGYP) are complementarity-determining-3. Residues 119–128 (FGSGTKLEIK) form a framework-4 region.

This chain is Ig kappa chain V-IV region S107B, found in Mus musculus (Mouse).